The chain runs to 224 residues: Homeobox protein Hox-B6 (224 aa).

Residues 127–132 (VYPWMQ) carry the Antp-type hexapeptide motif. Residues 146-205 (GRRGRQTYTRYQTLELEKEFHYNRYLTRRRRIEIAHALCLTERQIKIWFQNRRMKWKKES) constitute a DNA-binding region (homeobox). S214 carries the phosphoserine modification.

This sequence belongs to the Antp homeobox family.

It localises to the nucleus. Functionally, sequence-specific transcription factor which is part of a developmental regulatory system that provides cells with specific positional identities on the anterior-posterior axis. The protein is Homeobox protein Hox-B6 (HOXB6) of Homo sapiens (Human).